A 650-amino-acid chain; its full sequence is Probable potassium transport system protein Kup 1 (650 aa).

12 consecutive transmembrane segments (helical) span residues 12 to 32 (GLLI…LYVM), 54 to 74 (ISLV…IIAL), 97 to 117 (WLVL…TLTP), 139 to 159 (VSSQ…LFSI), 170 to 190 (AFGP…LINM), 216 to 236 (AGIF…ALYS), 249 to 269 (SWPF…VWIL), 295 to 315 (LAAI…LITG), 344 to 364 (IYIP…VLYF), 375 to 395 (GLSI…WLAM), 400 to 420 (PVWN…FMIS), and 428 to 448 (GGYV…VWYY).

The protein belongs to the HAK/KUP transporter (TC 2.A.72) family.

It is found in the cell membrane. It catalyses the reaction K(+)(in) + H(+)(in) = K(+)(out) + H(+)(out). Its function is as follows. Transport of potassium into the cell. Likely operates as a K(+):H(+) symporter. The chain is Probable potassium transport system protein Kup 1 from Lactobacillus acidophilus (strain ATCC 700396 / NCK56 / N2 / NCFM).